Here is a 418-residue protein sequence, read N- to C-terminus: Putative ion-transport protein YfeO (418 aa).

Helical transmembrane passes span 9 to 31 (MLLLSLPAVAIGIASSLILIMVM), 55 to 77 (SPLWIIGVLTLTGIAVGLVIRFS), 90 to 112 (LIGAPIPPSALPGLIVALILGLA), 122 to 140 (PIITVNIALAVAIGARLLP), 147 to 169 (WTILASAGTIGALFGTPVAAALI), 189 to 211 (PLMAAAAGALTTGLFFHPHFSLP), 223 to 244 (ILSGAIVAAIAIAAGMVAVWCL), 259 to 281 (FVLGIGGFILGILGVIGGPVSLF), 301 to 323 (YFLLAVIKLAALVVAAASGFRGG), 343 to 363 (VPAVPAAITVSCAILGIVLVV), and 376 to 398 (VVVPNTTLLPLLCIVMLPAWLLL).

It belongs to the chloride channel (TC 2.A.49) family.

It is found in the cell membrane. The sequence is that of Putative ion-transport protein YfeO (yfeO) from Escherichia coli O6:H1 (strain CFT073 / ATCC 700928 / UPEC).